The chain runs to 454 residues: Bifunctional protein GlmU (454 aa).

Positions 1–226 (MTTTVIILAA…AFEVEGVNDR (226 aa)) are pyrophosphorylase. UDP-N-acetyl-alpha-D-glucosamine contacts are provided by residues 8–11 (LAAG), Lys22, Gln73, 78–79 (GT), 100–102 (YGD), Gly137, Glu151, Asn166, and Asn224. Residue Asp102 participates in Mg(2+) binding. Mg(2+) is bound at residue Asn224. The segment at 227–247 (LQLAALEREFQLQQAKSLMQQ) is linker. Positions 248–454 (GVTLTDPSRF…NYQRPQKLKK (207 aa)) are N-acetyltransferase. Residues Arg330 and Lys348 each contribute to the UDP-N-acetyl-alpha-D-glucosamine site. His360 (proton acceptor) is an active-site residue. Residues Tyr363 and Asn374 each contribute to the UDP-N-acetyl-alpha-D-glucosamine site. Acetyl-CoA is bound by residues Ala377, 383-384 (NY), Ser402, Ala420, and Arg437.

The protein in the N-terminal section; belongs to the N-acetylglucosamine-1-phosphate uridyltransferase family. This sequence in the C-terminal section; belongs to the transferase hexapeptide repeat family. Homotrimer. The cofactor is Mg(2+).

The protein resides in the cytoplasm. The catalysed reaction is alpha-D-glucosamine 1-phosphate + acetyl-CoA = N-acetyl-alpha-D-glucosamine 1-phosphate + CoA + H(+). It carries out the reaction N-acetyl-alpha-D-glucosamine 1-phosphate + UTP + H(+) = UDP-N-acetyl-alpha-D-glucosamine + diphosphate. It participates in nucleotide-sugar biosynthesis; UDP-N-acetyl-alpha-D-glucosamine biosynthesis; N-acetyl-alpha-D-glucosamine 1-phosphate from alpha-D-glucosamine 6-phosphate (route II): step 2/2. It functions in the pathway nucleotide-sugar biosynthesis; UDP-N-acetyl-alpha-D-glucosamine biosynthesis; UDP-N-acetyl-alpha-D-glucosamine from N-acetyl-alpha-D-glucosamine 1-phosphate: step 1/1. Its pathway is bacterial outer membrane biogenesis; LPS lipid A biosynthesis. Functionally, catalyzes the last two sequential reactions in the de novo biosynthetic pathway for UDP-N-acetylglucosamine (UDP-GlcNAc). The C-terminal domain catalyzes the transfer of acetyl group from acetyl coenzyme A to glucosamine-1-phosphate (GlcN-1-P) to produce N-acetylglucosamine-1-phosphate (GlcNAc-1-P), which is converted into UDP-GlcNAc by the transfer of uridine 5-monophosphate (from uridine 5-triphosphate), a reaction catalyzed by the N-terminal domain. This Acinetobacter baylyi (strain ATCC 33305 / BD413 / ADP1) protein is Bifunctional protein GlmU.